The chain runs to 121 residues: Inner membrane protein YhaH (121 aa).

Over 1 to 23 (MDWYLKVLKNYVGFRGRARRKEY) the chain is Periplasmic. Residues 24-44 (WMFILVNIIFTFVLGLLDKML) form a helical membrane-spanning segment. At 45 to 49 (GWQRA) the chain is on the cytoplasmic side. The chain crosses the membrane as a helical span at residues 50–70 (GGEGILTTIYGILVFLPWWAV). Over 71-80 (QFRRLHDTDR) the chain is Periplasmic. Residues 81–101 (SAWWALLFLIPFIGWLIIIVF) traverse the membrane as a helical segment. The Cytoplasmic portion of the chain corresponds to 102–121 (NCQAGTPGENRFGPDPKLEP).

The protein to E.coli YhaI.

Its subcellular location is the cell inner membrane. This chain is Inner membrane protein YhaH (yhaH), found in Escherichia coli O157:H7.